The following is a 466-amino-acid chain: Probable aminotransferase Rv3329 (466 aa).

Lys-294 bears the N6-(pyridoxal phosphate)lysine mark.

Belongs to the class-III pyridoxal-phosphate-dependent aminotransferase family. Pyridoxal 5'-phosphate serves as cofactor.

Functionally, probable aminotransferase. This is Probable aminotransferase Rv3329 from Mycobacterium tuberculosis (strain ATCC 25618 / H37Rv).